A 347-amino-acid polypeptide reads, in one-letter code: ATPase GET3 (347 aa).

26 to 33 serves as a coordination point for ATP; it reads KGGVGKTT. Residue Asp57 is part of the active site. 2 residues coordinate ATP: Glu240 and Asn267. Zn(2+) contacts are provided by Cys279 and Cys282.

This sequence belongs to the arsA ATPase family. In terms of assembly, homodimer. Component of the Golgi to ER traffic (GET) complex, which is composed of GET1, GET2 and GET3. Within the complex, GET1 and GET2 form a heterotetramer which is stabilized by phosphatidylinositol binding and which binds to the GET3 homodimer. Interacts with the chloride channel protein GEF1.

It is found in the cytoplasm. It localises to the endoplasmic reticulum. Its subcellular location is the golgi apparatus. In terms of biological role, ATPase required for the post-translational delivery of tail-anchored (TA) proteins to the endoplasmic reticulum. Recognizes and selectively binds the transmembrane domain of TA proteins in the cytosol. This complex then targets to the endoplasmic reticulum by membrane-bound receptors GET1 and GET2, where the tail-anchored protein is released for insertion. This process is regulated by ATP binding and hydrolysis. ATP binding drives the homodimer towards the closed dimer state, facilitating recognition of newly synthesized TA membrane proteins. ATP hydrolysis is required for insertion. Subsequently, the homodimer reverts towards the open dimer state, lowering its affinity for the GET1-GET2 receptor, and returning it to the cytosol to initiate a new round of targeting. Cooperates with the HDEL receptor ERD2 to mediate the ATP-dependent retrieval of resident ER proteins that contain a C-terminal H-D-E-L retention signal from the Golgi to the ER. Involved in low-level resistance to the oxyanions arsenite and arsenate, and in heat tolerance. This is ATPase GET3 from Scheffersomyces stipitis (strain ATCC 58785 / CBS 6054 / NBRC 10063 / NRRL Y-11545) (Yeast).